A 427-amino-acid chain; its full sequence is Serine hydroxymethyltransferase (427 aa).

120-122 (GHI) contacts (6S)-5,6,7,8-tetrahydrofolate. Lys226 is modified (N6-(pyridoxal phosphate)lysine). Glu243 lines the (6S)-5,6,7,8-tetrahydrofolate pocket.

The protein belongs to the SHMT family. In terms of assembly, homodimer. Pyridoxal 5'-phosphate is required as a cofactor.

The protein resides in the cytoplasm. The protein operates within amino-acid biosynthesis; glycine biosynthesis; glycine from L-serine: step 1/1. Catalyzes the reversible interconversion of serine and glycine with a modified folate serving as the one-carbon carrier. Also exhibits a pteridine-independent aldolase activity toward beta-hydroxyamino acids, producing glycine and aldehydes, via a retro-aldol mechanism. The protein is Serine hydroxymethyltransferase of Thermococcus gammatolerans (strain DSM 15229 / JCM 11827 / EJ3).